The chain runs to 493 residues: Alpha-amylase-related protein (493 aa).

The N-terminal stretch at 1–19 is a signal peptide; that stretch reads MFKLALTLTLCLAGSLSLA. Gln20 is subject to Pyrrolidone carboxylic acid. Cys47 and Cys103 are disulfide-bonded. Positions 117, 168, and 177 each coordinate Ca(2+). Cysteines 156 and 170 form a disulfide. Arg205 contributes to the chloride binding site. Residue Asp207 is the Nucleophile of the active site. Ca(2+) is bound at residue His211. The Proton donor role is filled by Glu244. Positions 307 and 342 each coordinate chloride. 3 disulfide bridges follow: Cys375–Cys381, Cys417–Cys440, and Cys447–Cys459.

It belongs to the glycosyl hydrolase 13 family. In terms of assembly, monomer. The cofactor is Ca(2+). Chloride serves as cofactor.

The protein resides in the secreted. The catalysed reaction is Endohydrolysis of (1-&gt;4)-alpha-D-glucosidic linkages in polysaccharides containing three or more (1-&gt;4)-alpha-linked D-glucose units.. The sequence is that of Alpha-amylase-related protein (Amyrel) from Drosophila teissieri (Fruit fly).